The following is a 232-amino-acid chain: Small ribosomal subunit protein uS3 (232 aa).

One can recognise a KH type-2 domain in the interval 39 to 107 (IREILHKELK…DVVINIVEIR (69 aa)).

The protein belongs to the universal ribosomal protein uS3 family. In terms of assembly, part of the 30S ribosomal subunit. Forms a tight complex with proteins S10 and S14.

Functionally, binds the lower part of the 30S subunit head. Binds mRNA in the 70S ribosome, positioning it for translation. In Rhodopseudomonas palustris (strain HaA2), this protein is Small ribosomal subunit protein uS3.